The primary structure comprises 151 residues: MPKIDKPLAQKVDERVFEQLLKYNPQTQNLWDIVGIFENERQKLRIEIAQYHEDIKNSQAKLKELREGITKAQNILRAIEQKISESPVPPEKEESQKEALMLKISELELENSKLLVELRDLKSEYQLEENLHQMQNMRETLQESLEDPSKP.

Positions Gly-35–Asp-147 form a coiled coil.

This is an uncharacterized protein from Helicobacter hepaticus (strain ATCC 51449 / 3B1).